Here is a 249-residue protein sequence, read N- to C-terminus: 3-deoxy-manno-octulosonate cytidylyltransferase (249 aa).

This sequence belongs to the KdsB family.

It is found in the cytoplasm. It carries out the reaction 3-deoxy-alpha-D-manno-oct-2-ulosonate + CTP = CMP-3-deoxy-beta-D-manno-octulosonate + diphosphate. It participates in nucleotide-sugar biosynthesis; CMP-3-deoxy-D-manno-octulosonate biosynthesis; CMP-3-deoxy-D-manno-octulosonate from 3-deoxy-D-manno-octulosonate and CTP: step 1/1. It functions in the pathway bacterial outer membrane biogenesis; lipopolysaccharide biosynthesis. Activates KDO (a required 8-carbon sugar) for incorporation into bacterial lipopolysaccharide in Gram-negative bacteria. The sequence is that of 3-deoxy-manno-octulosonate cytidylyltransferase from Aliivibrio salmonicida (strain LFI1238) (Vibrio salmonicida (strain LFI1238)).